The sequence spans 359 residues: Probable L-ascorbate peroxidase 7, chloroplastic (359 aa).

A chloroplast-targeting transit peptide spans 1–71 (MAAQRLAALH…KAAGSGRSVM (71 aa)). H118 (proton acceptor) is an active-site residue. Heme b is bound at residue H247. T248 provides a ligand contact to K(+). The interval 251-277 (RSRPERSGWGKPETKYTKNGPGAPGGQ) is disordered. The span at 252 to 266 (SRPERSGWGKPETKY) shows a compositional bias: basic and acidic residues. K(+) contacts are provided by T280 and D287.

Belongs to the peroxidase family. Ascorbate peroxidase subfamily. Requires heme b as cofactor. In terms of tissue distribution, expressed in roots, leaves, stems and flowers.

It localises to the plastid. The protein localises to the chloroplast stroma. It carries out the reaction L-ascorbate + H2O2 = L-dehydroascorbate + 2 H2O. Functionally, plays a key role in hydrogen peroxide removal. In Oryza sativa subsp. japonica (Rice), this protein is Probable L-ascorbate peroxidase 7, chloroplastic.